The following is a 463-amino-acid chain: Glutamate--tRNA ligase (463 aa).

Residues 10-20 (PSPTGHLHIGG) carry the 'HIGH' region motif. Residues 236 to 240 (KLSKR) carry the 'KMSKS' region motif. Lys-239 is an ATP binding site.

The protein belongs to the class-I aminoacyl-tRNA synthetase family. Glutamate--tRNA ligase type 1 subfamily. As to quaternary structure, monomer.

It localises to the cytoplasm. The catalysed reaction is tRNA(Glu) + L-glutamate + ATP = L-glutamyl-tRNA(Glu) + AMP + diphosphate. In terms of biological role, catalyzes the attachment of glutamate to tRNA(Glu) in a two-step reaction: glutamate is first activated by ATP to form Glu-AMP and then transferred to the acceptor end of tRNA(Glu). The chain is Glutamate--tRNA ligase from Nitratidesulfovibrio vulgaris (strain DP4) (Desulfovibrio vulgaris).